The sequence spans 663 residues: Ras and EF-hand domain-containing protein (663 aa).

2 EF-hand domains span residues 1 to 33 and 35 to 70; these read MNHA…CREL and VPAD…VSEA. Positions 14, 16, 18, 20, 25, 48, 50, 52, 54, and 59 each coordinate Ca(2+). A coiled-coil region spans residues 122-297; it reads ELLLQQFEDL…LKKMVMEFQS (176 aa). Over residues 324 to 336 the composition is skewed to polar residues; sequence SQENASTKRQLSP. Positions 324-343 are disordered; the sequence is SQENASTKRQLSPRNEVLPR. GTP is bound by residues 477 to 482, 580 to 583, and 615 to 616; these read GSGKSS, NKVD, and AK.

This sequence belongs to the small GTPase superfamily. Rab family. In terms of assembly, homodimer.

Its subcellular location is the cytoplasm. The protein localises to the perinuclear region. Functionally, binds predominantly GDP, and also GTP. In Danio rerio (Zebrafish), this protein is Ras and EF-hand domain-containing protein (rasef).